Consider the following 438-residue polypeptide: Mannan endo-1,4-beta-mannosidase F (438 aa).

An N-terminal signal peptide occupies residues 1-17 (MHPLPSVALLSAIGAVA). Residues 19 to 54 (QVGPWGQCGGRSYTGETSCVSGWSCVLFNEWYSQCQ) form the CBM1 domain. Residues 60–96 (STSSVSATAAPSSTSSSKESVPSATTSKKPVPTGSSS) are ser-rich linker. Low complexity predominate over residues 61-86 (TSSVSATAAPSSTSSSKESVPSATTS). The interval 61 to 92 (TSSVSATAAPSSTSSSKESVPSATTSKKPVPT) is disordered. Residues 97 to 438 (FVKADGLKFN…CGVADHLSTL (342 aa)) form a catalytic region. Positions 149 and 263 each coordinate substrate. Glu264 serves as the catalytic Proton donor. The N-linked (GlcNAc...) asparagine glycan is linked to Asn277. Tyr339 is a substrate binding site. Glu373 acts as the Nucleophile in catalysis. Trp402 serves as a coordination point for substrate.

This sequence belongs to the glycosyl hydrolase 5 (cellulase A) family.

It is found in the secreted. It catalyses the reaction Random hydrolysis of (1-&gt;4)-beta-D-mannosidic linkages in mannans, galactomannans and glucomannans.. Endo-1,4-mannanase, a crucial enzyme for depolymerization of seed galactomannans and wood galactoglucomannans. The chain is Mannan endo-1,4-beta-mannosidase F (manF) from Aspergillus fumigatus (strain ATCC MYA-4609 / CBS 101355 / FGSC A1100 / Af293) (Neosartorya fumigata).